An 86-amino-acid chain; its full sequence is Insulin (86 aa).

Disulfide bonds link Cys7–Cys72, Cys19–Cys85, and Cys71–Cys76. The propeptide at 33–63 (ELEDPQVGQADPGVVPEAGRLQPLALEMTLQ) is c peptide.

Belongs to the insulin family. In terms of assembly, heterodimer of a B chain and an A chain linked by two disulfide bonds.

Its subcellular location is the secreted. In terms of biological role, insulin decreases blood glucose concentration. It increases cell permeability to monosaccharides, amino acids and fatty acids. It accelerates glycolysis, the pentose phosphate cycle, and glycogen synthesis in liver. This is Insulin (INS) from Chinchilla chinchilla (Short-tailed chinchilla).